We begin with the raw amino-acid sequence, 406 residues long: CinA-like protein (406 aa).

Belongs to the CinA family.

The sequence is that of CinA-like protein from Pseudothermotoga lettingae (strain ATCC BAA-301 / DSM 14385 / NBRC 107922 / TMO) (Thermotoga lettingae).